Consider the following 175-residue polypeptide: ATP synthase subunit b (175 aa).

Residues 22-42 form a helical membrane-spanning segment; it reads LNLLETNIINIAIVFGLLIFL.

Belongs to the ATPase B chain family. As to quaternary structure, F-type ATPases have 2 components, F(1) - the catalytic core - and F(0) - the membrane proton channel. F(1) has five subunits: alpha(3), beta(3), gamma(1), delta(1), epsilon(1). F(0) has four main subunits: a(1), b(1), b'(1) and c(10-14). The alpha and beta chains form an alternating ring which encloses part of the gamma chain. F(1) is attached to F(0) by a central stalk formed by the gamma and epsilon chains, while a peripheral stalk is formed by the delta, b and b' chains.

It is found in the cell inner membrane. Its function is as follows. F(1)F(0) ATP synthase produces ATP from ADP in the presence of a proton or sodium gradient. F-type ATPases consist of two structural domains, F(1) containing the extramembraneous catalytic core and F(0) containing the membrane proton channel, linked together by a central stalk and a peripheral stalk. During catalysis, ATP synthesis in the catalytic domain of F(1) is coupled via a rotary mechanism of the central stalk subunits to proton translocation. In terms of biological role, component of the F(0) channel, it forms part of the peripheral stalk, linking F(1) to F(0). The sequence is that of ATP synthase subunit b from Gloeobacter violaceus (strain ATCC 29082 / PCC 7421).